Here is a 108-residue protein sequence, read N- to C-terminus: Structural protein 1 (108 aa).

The Intravirion portion of the chain corresponds to 1–77 (MSRVSEYGVP…LKMQMDRLCN (77 aa)). The chain crosses the membrane as a helical; Signal-anchor for type II membrane protein span at residues 78–98 (VLGVVLQMATLALVTYIAFVV). At 99–108 (HTRATSCKRE) the chain is on the virion surface side.

It belongs to the varicellovirus ORF1 protein family. As to quaternary structure, homodimer. In terms of processing, phosphorylated.

It is found in the virion membrane. Its subcellular location is the host Golgi apparatus membrane. The sequence is that of Structural protein 1 from Homo sapiens (Human).